A 147-amino-acid chain; its full sequence is Deoxyuridine 5'-triphosphate nucleotidohydrolase (147 aa).

Substrate-binding positions include 67–69 (RSG), Asn-80, and 84–86 (LID).

It belongs to the dUTPase family. Mg(2+) serves as cofactor.

The enzyme catalyses dUTP + H2O = dUMP + diphosphate + H(+). Its pathway is pyrimidine metabolism; dUMP biosynthesis; dUMP from dCTP (dUTP route): step 2/2. In terms of biological role, this enzyme is involved in nucleotide metabolism: it produces dUMP, the immediate precursor of thymidine nucleotides and it decreases the intracellular concentration of dUTP so that uracil cannot be incorporated into DNA. The chain is Deoxyuridine 5'-triphosphate nucleotidohydrolase from Dictyoglomus turgidum (strain DSM 6724 / Z-1310).